A 201-amino-acid chain; its full sequence is Peptidyl-tRNA hydrolase (201 aa).

Tyr15 provides a ligand contact to tRNA. The Proton acceptor role is filled by His20. The tRNA site is built by Tyr66, Asn68, and Asn114.

This sequence belongs to the PTH family. In terms of assembly, monomer.

The protein resides in the cytoplasm. The enzyme catalyses an N-acyl-L-alpha-aminoacyl-tRNA + H2O = an N-acyl-L-amino acid + a tRNA + H(+). Hydrolyzes ribosome-free peptidyl-tRNAs (with 1 or more amino acids incorporated), which drop off the ribosome during protein synthesis, or as a result of ribosome stalling. In terms of biological role, catalyzes the release of premature peptidyl moieties from peptidyl-tRNA molecules trapped in stalled 50S ribosomal subunits, and thus maintains levels of free tRNAs and 50S ribosomes. This chain is Peptidyl-tRNA hydrolase, found in Burkholderia pseudomallei (strain K96243).